The following is a 61-amino-acid chain: MDPNCSCATRDSCACASSCKCKECKCTSCKKSCCSCCPAGCTKCAQGCICKGALDKCSCCA.

N-acetylmethionine is present on methionine 1. Positions 1–29 (MDPNCSCATRDSCACASSCKCKECKCTSC) are beta. 20 residues coordinate a divalent metal cation: cysteine 5, cysteine 7, cysteine 13, cysteine 15, cysteine 19, cysteine 21, cysteine 24, cysteine 26, cysteine 29, cysteine 33, cysteine 34, cysteine 36, cysteine 37, cysteine 41, cysteine 44, cysteine 48, cysteine 50, cysteine 57, cysteine 59, and cysteine 60. An alpha region spans residues 30–61 (KKSCCSCCPAGCTKCAQGCICKGALDKCSCCA).

The protein belongs to the metallothionein superfamily. Type 1 family. In terms of assembly, monomer.

Its function is as follows. Metallothioneins have a high content of cysteine residues that bind various heavy metals; these proteins are transcriptionally regulated by both heavy metals and glucocorticoids. The sequence is that of Metallothionein-2E from Oryctolagus cuniculus (Rabbit).